The following is a 152-amino-acid chain: Xanthine-guanine phosphoribosyltransferase (152 aa).

Residues 37-38 (RG), Arg69, and 88-96 (DDLVDTGGT) each bind 5-phospho-alpha-D-ribose 1-diphosphate. Arg69 contacts GMP. Position 89 (Asp89) interacts with Mg(2+). Positions 92 and 135 each coordinate guanine. Xanthine contacts are provided by Asp92 and Ile135. GMP contacts are provided by residues 92–96 (DTGGT) and 134–135 (WI).

The protein belongs to the purine/pyrimidine phosphoribosyltransferase family. XGPT subfamily. As to quaternary structure, homotetramer. The cofactor is Mg(2+).

It is found in the cell inner membrane. The catalysed reaction is GMP + diphosphate = guanine + 5-phospho-alpha-D-ribose 1-diphosphate. It catalyses the reaction XMP + diphosphate = xanthine + 5-phospho-alpha-D-ribose 1-diphosphate. The enzyme catalyses IMP + diphosphate = hypoxanthine + 5-phospho-alpha-D-ribose 1-diphosphate. The protein operates within purine metabolism; GMP biosynthesis via salvage pathway; GMP from guanine: step 1/1. It functions in the pathway purine metabolism; XMP biosynthesis via salvage pathway; XMP from xanthine: step 1/1. In terms of biological role, purine salvage pathway enzyme that catalyzes the transfer of the ribosyl-5-phosphate group from 5-phospho-alpha-D-ribose 1-diphosphate (PRPP) to the N9 position of the 6-oxopurines guanine and xanthine to form the corresponding ribonucleotides GMP (guanosine 5'-monophosphate) and XMP (xanthosine 5'-monophosphate), with the release of PPi. To a lesser extent, also acts on hypoxanthine. This is Xanthine-guanine phosphoribosyltransferase from Klebsiella pneumoniae (strain 342).